A 227-amino-acid polypeptide reads, in one-letter code: MAAEQPLNGAFYGPSVPPPAPKGYYRRGHGRGCGCCLLSLFVKVIISLIVILGVAALIFWLIVRPRAIKFHVTDASLTRFDHTSPDNILRYNLALTVPVRNPNKRIGLYYDRIEAHAYYEGKRFSTITLTPFYQGHKNTTVLTPTFQGQNLVIFNAGQSRTLNAERISGVYNIEIKFRLRVRFKLGDLKFRRIKPKVDCDDLRLPLSTSNGTTTTSTVFPIKCDFDF.

A helical transmembrane segment spans residues 42-62; sequence VKVIISLIVILGVAALIFWLI. Asn138 and Asn210 each carry an N-linked (GlcNAc...) asparagine glycan.

Expressed in senescing leaves.

The protein localises to the cell membrane. In terms of biological role, may play a role in plant immunity. This is NDR1/HIN1-like protein 10 from Arabidopsis thaliana (Mouse-ear cress).